Consider the following 152-residue polypeptide: Large ribosomal subunit protein uL15 (152 aa).

Residues 1–56 (MELNTLKPAKNSVKQNTRYGRGQGSGKGGTSTRGHKGAKSRSGYKSKPGFEGGQLP) form a disordered region. A compositionally biased stretch (gly residues) spans 21-31 (RGQGSGKGGTS). The span at 33–44 (RGHKGAKSRSGY) shows a compositional bias: basic residues.

This sequence belongs to the universal ribosomal protein uL15 family. In terms of assembly, part of the 50S ribosomal subunit.

Its function is as follows. Binds to the 23S rRNA. The protein is Large ribosomal subunit protein uL15 of Amoebophilus asiaticus (strain 5a2).